A 59-amino-acid polypeptide reads, in one-letter code: Potassium channel toxin alpha-KTx 15.5 (59 aa).

The first 22 residues, 1 to 22 (MKFSSIILLTLLICSMSIFGNC), serve as a signal peptide directing secretion. At Q23 the chain carries Pyrrolidone carboxylic acid. 3 disulfide bridges follow: C30–C50, C35–C55, and C39–C57.

Belongs to the short scorpion toxin superfamily. Potassium channel inhibitor family. Alpha-KTx 15 subfamily. Expressed by the venom gland.

Its subcellular location is the secreted. Its function is as follows. Blocker of A-type voltage-gated potassium channels of cerebellar granular cells. May also inhibit Kv4/KCND when coexpressed with DPP6 or DPP10. The occlusion of the outer entry of the K(+) conducting pore is partially reversible and affects both open and closed channels. It shares the same target in rat brain than BmTX3 (AC Q8I0L5) and AmmTX3 (AC P60208). This Androctonus australis (Sahara scorpion) protein is Potassium channel toxin alpha-KTx 15.5.